Consider the following 275-residue polypeptide: Large ribosomal subunit protein uL2 (275 aa).

The disordered stretch occupies residues 224 to 275 (AMNPVDHPHGGGEAKAGQGNPHPVTPWGVPTKGYKTRKNKRTQQFIVRDRRG).

It belongs to the universal ribosomal protein uL2 family. As to quaternary structure, part of the 50S ribosomal subunit. Forms a bridge to the 30S subunit in the 70S ribosome.

Its function is as follows. One of the primary rRNA binding proteins. Required for association of the 30S and 50S subunits to form the 70S ribosome, for tRNA binding and peptide bond formation. It has been suggested to have peptidyltransferase activity; this is somewhat controversial. Makes several contacts with the 16S rRNA in the 70S ribosome. The sequence is that of Large ribosomal subunit protein uL2 from Xanthomonas oryzae pv. oryzae (strain MAFF 311018).